A 399-amino-acid polypeptide reads, in one-letter code: NADH-quinone oxidoreductase subunit D 2 (399 aa).

Residues 1-20 are disordered; that stretch reads MIASKESNSAATPATSAPTL. The segment covering 9–20 has biased composition (low complexity); it reads SAATPATSAPTL.

It belongs to the complex I 49 kDa subunit family. In terms of assembly, NDH-1 is composed of 14 different subunits. Subunits NuoB, C, D, E, F, and G constitute the peripheral sector of the complex.

It is found in the cell inner membrane. It catalyses the reaction a quinone + NADH + 5 H(+)(in) = a quinol + NAD(+) + 4 H(+)(out). NDH-1 shuttles electrons from NADH, via FMN and iron-sulfur (Fe-S) centers, to quinones in the respiratory chain. The immediate electron acceptor for the enzyme in this species is believed to be ubiquinone. Couples the redox reaction to proton translocation (for every two electrons transferred, four hydrogen ions are translocated across the cytoplasmic membrane), and thus conserves the redox energy in a proton gradient. The sequence is that of NADH-quinone oxidoreductase subunit D 2 from Opitutus terrae (strain DSM 11246 / JCM 15787 / PB90-1).